Here is a 183-residue protein sequence, read N- to C-terminus: ATP synthase subunit delta (183 aa).

Belongs to the ATPase delta chain family. F-type ATPases have 2 components, F(1) - the catalytic core - and F(0) - the membrane proton channel. F(1) has five subunits: alpha(3), beta(3), gamma(1), delta(1), epsilon(1). F(0) has three main subunits: a(1), b(2) and c(10-14). The alpha and beta chains form an alternating ring which encloses part of the gamma chain. F(1) is attached to F(0) by a central stalk formed by the gamma and epsilon chains, while a peripheral stalk is formed by the delta and b chains.

The protein localises to the cell inner membrane. In terms of biological role, f(1)F(0) ATP synthase produces ATP from ADP in the presence of a proton or sodium gradient. F-type ATPases consist of two structural domains, F(1) containing the extramembraneous catalytic core and F(0) containing the membrane proton channel, linked together by a central stalk and a peripheral stalk. During catalysis, ATP synthesis in the catalytic domain of F(1) is coupled via a rotary mechanism of the central stalk subunits to proton translocation. Its function is as follows. This protein is part of the stalk that links CF(0) to CF(1). It either transmits conformational changes from CF(0) to CF(1) or is implicated in proton conduction. This chain is ATP synthase subunit delta, found in Thermotoga maritima (strain ATCC 43589 / DSM 3109 / JCM 10099 / NBRC 100826 / MSB8).